We begin with the raw amino-acid sequence, 253 residues long: Small ribosomal subunit protein uS3 (253 aa).

The KH type-2 domain occupies 39-107 (VRRALKKRLY…EVHLNIVEIR (69 aa)). The disordered stretch occupies residues 215–253 (LDKRLAGESGPAGEGGGRERGDRPDRGPRRERRGEPSNA). Residues 230-253 (GGRERGDRPDRGPRRERRGEPSNA) show a composition bias toward basic and acidic residues.

Belongs to the universal ribosomal protein uS3 family. Part of the 30S ribosomal subunit. Forms a tight complex with proteins S10 and S14.

Binds the lower part of the 30S subunit head. Binds mRNA in the 70S ribosome, positioning it for translation. The protein is Small ribosomal subunit protein uS3 of Phenylobacterium zucineum (strain HLK1).